The chain runs to 332 residues: Ornithine carbamoyltransferase, catabolic (332 aa).

Carbamoyl phosphate is bound by residues 60 to 63 (STRT), Gln87, Arg111, and 138 to 141 (HPTQ). L-ornithine is bound by residues Asn170, Asp230, and 234 to 235 (SM). Carbamoyl phosphate-binding positions include 271-272 (CL) and Arg316.

It belongs to the aspartate/ornithine carbamoyltransferase superfamily. OTCase family.

Its subcellular location is the cytoplasm. The enzyme catalyses carbamoyl phosphate + L-ornithine = L-citrulline + phosphate + H(+). It participates in amino-acid degradation; L-arginine degradation via ADI pathway; carbamoyl phosphate from L-arginine: step 2/2. In terms of biological role, reversibly catalyzes the transfer of the carbamoyl group from carbamoyl phosphate (CP) to the N(epsilon) atom of ornithine (ORN) to produce L-citrulline. The chain is Ornithine carbamoyltransferase, catabolic (arcB) from Bacillus cereus (strain ATCC 14579 / DSM 31 / CCUG 7414 / JCM 2152 / NBRC 15305 / NCIMB 9373 / NCTC 2599 / NRRL B-3711).